Here is a 1051-residue protein sequence, read N- to C-terminus: MANKHNLCKKRSLDLSEESTSESHAKRQCTENLFWPEGEDDDSFFSNAHLEDLLDGRKEELFGTQATTSTNKMTQSGSDDGLGLFADTSFPSAQSVPPNSASKPDEASAPTDKHQIDLADEENADKLFKKINLNDLSIAEMEDIFHGADDFSDPMVQNTQLFLDAMTFKKPKTPEKLLAPLKDDSMSFISKSVIEGLVQGTQYVTCEELKNQSLLDPVNWETQAFADFEKNNQDIDKFPSKGEFYGLPDKVKKMILEHKGINSLYEWQDECLNLPAIRQRKNLIYALPTSGGKTLVAEILMLRELLCRERNVLFILPYVSIVQEKVSAMSPFAIDLDFIVEEYTAGKGKCPPQPRRKRRSLFIASIEKGAVLMDSLIDVQRPHEIGLVVVDELHLIGEKGRGATLEAFLTKVMFLNANIQIVGMSATIGNLSEISSFLNADVYTRGFRPVELKEYIKCGPDLLEINSAGQTLEEIFVPSRSVEYNYSEAVKRADPDHLAGLISECAPEHCCLVFCPSRKNCENVALLLSRIVPKHKFFEHRRSEKLDLMDALDKMCGILSPVLAKTLPYGIAYHHSGLTTDERKYIETAYRFGVVTVICCTSTLAAGVNLPAKRVIIRAPYVGQEFLTLCKYKQMVGRAGRAGLGEAGESILIAQSKDNLLVGQMLFSPMDKALSSLDQNEAVGLQSLILSVVGLNLAECRRDLNRLVNSTLLSVQAKSLEVAVNEIVLRILREMFKNKVLQLAEPQAKSKINSSDIITSQDVSQANRPAGDRRLLIGQSTPFKLTNIGRAAFKAGIDYKRANAIHKELKQAQQQLILTNYLHLLYLVVCFNSNERGDELFPADASILFGVYTSLPLDSQAMFKQLGFTEAHAARLFKTQSVQGPLSLQLNRLYKVLILADILNLLPIPSVASKYNVERGTLQHLISQSTAAASAIVRLCEELEEFWCYKPLFERILHKMDRCGTFELEPLMELPAVKINRARQLYAAGFQTIGDIARVRPSHLVQSLEHMPLRVATEIVSAAKIILMKKLDHLEEETENLKDCLKTSDKN.

Over residues 1-10 the composition is skewed to basic residues; the sequence is MANKHNLCKK. Disordered regions lie at residues 1 to 28 and 61 to 112; these read MANK…AKRQ and LFGT…APTD. Polar residues-rich tracts occupy residues 64–78 and 89–102; these read TQAT…QSGS and SFPS…NSAS. Basic and acidic residues predominate over residues 103 to 112; the sequence is KPDEASAPTD. Positions 274–446 constitute a Helicase ATP-binding domain; that stretch reads LPAIRQRKNL…FLNADVYTRG (173 aa). ATP is bound at residue 287-294; that stretch reads LPTSGGKT. The DEAH box motif lies at 391–394; the sequence is DELH. In terms of domain architecture, Helicase C-terminal spans 497–689; that stretch reads HLAGLISECA…NEAVGLQSLI (193 aa).

It belongs to the helicase family. SKI2 subfamily.

The protein localises to the nucleus. It localises to the chromosome. The enzyme catalyses Couples ATP hydrolysis with the unwinding of duplex DNA by translocating in the 3'-5' direction.. It carries out the reaction ATP + H2O = ADP + phosphate + H(+). Functionally, single-stranded 3'-5' DNA helicase that plays a key role in homology-driven double-strand break (DSB) repair. Involved in different DSB repair mechanisms that are guided by annealing of extensive stretches of complementary bases at break ends, such as microhomology-mediated end-joining (MMEJ), single-strand annealing (SSA) or synthesis-dependent strand annealing (SDSA). This is Helicase POLQ-like from Drosophila melanogaster (Fruit fly).